A 122-amino-acid chain; its full sequence is Large ribosomal subunit protein uL14 (122 aa).

This sequence belongs to the universal ribosomal protein uL14 family. In terms of assembly, part of the 50S ribosomal subunit. Forms a cluster with proteins L3 and L19. In the 70S ribosome, L14 and L19 interact and together make contacts with the 16S rRNA in bridges B5 and B8.

Its function is as follows. Binds to 23S rRNA. Forms part of two intersubunit bridges in the 70S ribosome. In Neisseria meningitidis serogroup C (strain 053442), this protein is Large ribosomal subunit protein uL14.